The following is a 132-amino-acid chain: Small ribosomal subunit protein uS9 (132 aa).

Belongs to the universal ribosomal protein uS9 family.

The sequence is that of Small ribosomal subunit protein uS9 from Methanothrix thermoacetophila (strain DSM 6194 / JCM 14653 / NBRC 101360 / PT) (Methanosaeta thermophila).